The sequence spans 359 residues: MAKQVLVELGERSYPIEIGQNLFSSSEPLARYLQNKNILIVTNETIAPLYLQQIEAMLSDFACVKPVILPDGEQYKTLEQMNTIFTSLLEQNLGRDTVLIALGGGVIGDMTGFAAASYQRGVDFIQIPTTLLSQVDSSVGGKTAVNHPLGKNMIGAFYQPKCVLIDTHCLSTLPKREFAAGMAEVIKYGVIWDAEFFQWLENNVEALKSLDTQALEYAISRCCEIKAEVVEKDETEQAVRALLNLGHTFGHAIEAEMGYGVWLHGEAVSAGTVLAAITSNKLGLVDESIVCRITALLAAFDLPTTAPDTMDFEQFIKHMRRDKKVLKGQLRLILPEGIGQAGIYSDVTDELLEEVISCA.

NAD(+)-binding positions include 71–76 (DGEQYK), 105–109 (GVIGD), 129–130 (TT), lysine 142, lysine 151, and 169–172 (CLST). Glutamate 184, histidine 247, and histidine 264 together coordinate Zn(2+).

Belongs to the sugar phosphate cyclases superfamily. Dehydroquinate synthase family. Co(2+) serves as cofactor. The cofactor is Zn(2+). It depends on NAD(+) as a cofactor.

The protein resides in the cytoplasm. It catalyses the reaction 7-phospho-2-dehydro-3-deoxy-D-arabino-heptonate = 3-dehydroquinate + phosphate. It functions in the pathway metabolic intermediate biosynthesis; chorismate biosynthesis; chorismate from D-erythrose 4-phosphate and phosphoenolpyruvate: step 2/7. In terms of biological role, catalyzes the conversion of 3-deoxy-D-arabino-heptulosonate 7-phosphate (DAHP) to dehydroquinate (DHQ). The chain is 3-dehydroquinate synthase from Shewanella pealeana (strain ATCC 700345 / ANG-SQ1).